A 790-amino-acid polypeptide reads, in one-letter code: Cadherin-18 (790 aa).

The N-terminal stretch at 1-24 (MKITSTSCICPVLVCLCFVQRCYG) is a signal peptide. Residues 25-53 (TTHHGSIRGTRNQTKHIEGETEVHHRPKR) constitute a propeptide that is removed on maturation. Residue Asn-36 is glycosylated (N-linked (GlcNAc...) asparagine). Cadherin domains follow at residues 54–159 (GWVW…APKF), 160–268 (TDGP…PPRF), 269–383 (PQKH…PPLF), 384–486 (SMPS…DNPP), and 487–608 (ELAR…FLSS). Residues 54-608 (GWVWNQFFVL…TCHAEAFLSS (555 aa)) lie on the Extracellular side of the membrane. An N-linked (GlcNAc...) asparagine glycan is attached at Asn-255. N-linked (GlcNAc...) asparagine glycans are attached at residues Asn-455 and Asn-536. Residues 609 to 636 (AGLSTGALIAILLCVVILLAIVVLFITL) traverse the membrane as a helical segment. Residues 637-790 (RRSKKEPLII…YGEIESERTT (154 aa)) are Cytoplasmic-facing. Ser-786 is modified (phosphoserine).

The protein localises to the cell membrane. Cadherins are calcium-dependent cell adhesion proteins. They preferentially interact with themselves in a homophilic manner in connecting cells; cadherins may thus contribute to the sorting of heterogeneous cell types. The chain is Cadherin-18 (CDH18) from Bos taurus (Bovine).